The chain runs to 269 residues: Tryptophan synthase alpha chain (269 aa).

Residues E41 and D52 each act as proton acceptor in the active site.

The protein belongs to the TrpA family. In terms of assembly, tetramer of two alpha and two beta chains.

The enzyme catalyses (1S,2R)-1-C-(indol-3-yl)glycerol 3-phosphate + L-serine = D-glyceraldehyde 3-phosphate + L-tryptophan + H2O. Its pathway is amino-acid biosynthesis; L-tryptophan biosynthesis; L-tryptophan from chorismate: step 5/5. Its function is as follows. The alpha subunit is responsible for the aldol cleavage of indoleglycerol phosphate to indole and glyceraldehyde 3-phosphate. This is Tryptophan synthase alpha chain from Geobacillus stearothermophilus (Bacillus stearothermophilus).